The following is a 353-amino-acid chain: UDP-N-acetylglucosamine--N-acetylmuramyl-(pentapeptide) pyrophosphoryl-undecaprenol N-acetylglucosamine transferase (353 aa).

Residues 10–12 (TGG), Asn124, Ser183, and Gln283 contribute to the UDP-N-acetyl-alpha-D-glucosamine site.

This sequence belongs to the glycosyltransferase 28 family. MurG subfamily.

The protein localises to the cell inner membrane. It carries out the reaction di-trans,octa-cis-undecaprenyl diphospho-N-acetyl-alpha-D-muramoyl-L-alanyl-D-glutamyl-meso-2,6-diaminopimeloyl-D-alanyl-D-alanine + UDP-N-acetyl-alpha-D-glucosamine = di-trans,octa-cis-undecaprenyl diphospho-[N-acetyl-alpha-D-glucosaminyl-(1-&gt;4)]-N-acetyl-alpha-D-muramoyl-L-alanyl-D-glutamyl-meso-2,6-diaminopimeloyl-D-alanyl-D-alanine + UDP + H(+). It participates in cell wall biogenesis; peptidoglycan biosynthesis. Cell wall formation. Catalyzes the transfer of a GlcNAc subunit on undecaprenyl-pyrophosphoryl-MurNAc-pentapeptide (lipid intermediate I) to form undecaprenyl-pyrophosphoryl-MurNAc-(pentapeptide)GlcNAc (lipid intermediate II). This Helicobacter pylori (strain Shi470) protein is UDP-N-acetylglucosamine--N-acetylmuramyl-(pentapeptide) pyrophosphoryl-undecaprenol N-acetylglucosamine transferase.